The primary structure comprises 106 residues: Met repressor (106 aa).

The protein belongs to the MetJ family. In terms of assembly, homodimer.

Its subcellular location is the cytoplasm. Functionally, this regulatory protein, when combined with SAM (S-adenosylmethionine) represses the expression of the methionine regulon and of enzymes involved in SAM synthesis. The sequence is that of Met repressor from Vibrio campbellii (strain ATCC BAA-1116).